The chain runs to 220 residues: Elongation factor Ts (220 aa).

Positions 83 to 86 (TDFV) are involved in Mg(2+) ion dislocation from EF-Tu.

It belongs to the EF-Ts family.

The protein localises to the cytoplasm. Functionally, associates with the EF-Tu.GDP complex and induces the exchange of GDP to GTP. It remains bound to the aminoacyl-tRNA.EF-Tu.GTP complex up to the GTP hydrolysis stage on the ribosome. In Synechococcus sp. (strain CC9605), this protein is Elongation factor Ts.